Here is a 404-residue protein sequence, read N- to C-terminus: L-cysteine:1D-myo-inositol 2-amino-2-deoxy-alpha-D-glucopyranoside ligase (404 aa).

Residue Cys35 coordinates Zn(2+). Residues 35 to 38, Thr50, and 73 to 75 each bind L-cysteinyl-5'-AMP; these read CGIT and NVT. The 'HIGH' region motif lies at 37–47; the sequence is ITPYDATHLGH. A 'ERGGDP' region motif is present at residues 178–183; that stretch reads ERGGDP. Trp219 is an L-cysteinyl-5'-AMP binding site. Cys223 lines the Zn(2+) pocket. 241-243 contributes to the L-cysteinyl-5'-AMP binding site; sequence GND. Residue His248 coordinates Zn(2+). Ile275 is an L-cysteinyl-5'-AMP binding site. The 'KMSKS' region signature appears at 281–285; it reads KMSKS.

The protein belongs to the class-I aminoacyl-tRNA synthetase family. MshC subfamily. As to quaternary structure, monomer. Requires Zn(2+) as cofactor.

It carries out the reaction 1D-myo-inositol 2-amino-2-deoxy-alpha-D-glucopyranoside + L-cysteine + ATP = 1D-myo-inositol 2-(L-cysteinylamino)-2-deoxy-alpha-D-glucopyranoside + AMP + diphosphate + H(+). Its function is as follows. Catalyzes the ATP-dependent condensation of GlcN-Ins and L-cysteine to form L-Cys-GlcN-Ins. The chain is L-cysteine:1D-myo-inositol 2-amino-2-deoxy-alpha-D-glucopyranoside ligase from Salinispora tropica (strain ATCC BAA-916 / DSM 44818 / JCM 13857 / NBRC 105044 / CNB-440).